The sequence spans 158 residues: NAD(P)H-quinone oxidoreductase subunit J, chloroplastic (158 aa).

Belongs to the complex I 30 kDa subunit family. In terms of assembly, NDH is composed of at least 16 different subunits, 5 of which are encoded in the nucleus.

The protein localises to the plastid. It localises to the chloroplast thylakoid membrane. It carries out the reaction a plastoquinone + NADH + (n+1) H(+)(in) = a plastoquinol + NAD(+) + n H(+)(out). The catalysed reaction is a plastoquinone + NADPH + (n+1) H(+)(in) = a plastoquinol + NADP(+) + n H(+)(out). NDH shuttles electrons from NAD(P)H:plastoquinone, via FMN and iron-sulfur (Fe-S) centers, to quinones in the photosynthetic chain and possibly in a chloroplast respiratory chain. The immediate electron acceptor for the enzyme in this species is believed to be plastoquinone. Couples the redox reaction to proton translocation, and thus conserves the redox energy in a proton gradient. The protein is NAD(P)H-quinone oxidoreductase subunit J, chloroplastic of Arabis hirsuta (Hairy rock-cress).